The following is a 185-amino-acid chain: Coiled-coil domain-containing protein 32 (185 aa).

The stretch at 78–98 forms a coiled coil; that stretch reads LASLEKKLRRIKGLNQEVTSK. Residues 159-185 form a disordered region; that stretch reads IPPESQVEKPVAEDEPAAGDKPAAAEQ.

Interacts with AP2S1; the interaction is direct and mediates association with adaptor protein complex 2 (AP-2).

Its subcellular location is the membrane. It is found in the coated pit. Regulates clathrin-mediated endocytsois of cargos such as transferrin probably through the association and modulation of adaptor protein complex 2 (AP-2). Has a role in ciliogenesis. Required for proper cephalic and left/right axis development. The polypeptide is Coiled-coil domain-containing protein 32 (Homo sapiens (Human)).